Here is a 900-residue protein sequence, read N- to C-terminus: Alanine--tRNA ligase (900 aa).

4 residues coordinate Zn(2+): H604, H608, C708, and H712.

This sequence belongs to the class-II aminoacyl-tRNA synthetase family. It depends on Zn(2+) as a cofactor.

Its subcellular location is the cytoplasm. The catalysed reaction is tRNA(Ala) + L-alanine + ATP = L-alanyl-tRNA(Ala) + AMP + diphosphate. In terms of biological role, catalyzes the attachment of alanine to tRNA(Ala) in a two-step reaction: alanine is first activated by ATP to form Ala-AMP and then transferred to the acceptor end of tRNA(Ala). Also edits incorrectly charged Ser-tRNA(Ala) and Gly-tRNA(Ala) via its editing domain. The sequence is that of Alanine--tRNA ligase from Saccharolobus islandicus (strain Y.G.57.14 / Yellowstone #1) (Sulfolobus islandicus).